We begin with the raw amino-acid sequence, 142 residues long: Metallothiol transferase FosB (142 aa).

One can recognise a VOC domain in the interval 5 to 120 (NVNHICFSVS…DGHKIELHTG (116 aa)). Residues His8, His67, and Glu116 each contribute to the Mg(2+) site. Glu116 serves as the catalytic Proton donor/acceptor.

This sequence belongs to the fosfomycin resistance protein family. FosB subfamily. As to quaternary structure, homodimer. Mg(2+) is required as a cofactor.

It localises to the cytoplasm. In terms of biological role, metallothiol transferase which confers resistance to fosfomycin by catalyzing the addition of a thiol cofactor to fosfomycin. L-cysteine is probably the physiological thiol donor. The protein is Metallothiol transferase FosB of Staphylococcus epidermidis (strain ATCC 35984 / DSM 28319 / BCRC 17069 / CCUG 31568 / BM 3577 / RP62A).